The primary structure comprises 251 residues: Coproheme decarboxylase (251 aa).

Residues Arg-133, 147 to 151 (YPMSK), His-174, Gln-187, and Ser-225 each bind Fe-coproporphyrin III. The active site involves Tyr-147.

This sequence belongs to the ChdC family. Type 1 subfamily. Fe-coproporphyrin III serves as cofactor.

It carries out the reaction Fe-coproporphyrin III + 2 H2O2 + 2 H(+) = heme b + 2 CO2 + 4 H2O. The enzyme catalyses Fe-coproporphyrin III + H2O2 + H(+) = harderoheme III + CO2 + 2 H2O. It catalyses the reaction harderoheme III + H2O2 + H(+) = heme b + CO2 + 2 H2O. Its pathway is porphyrin-containing compound metabolism; protoheme biosynthesis. Involved in coproporphyrin-dependent heme b biosynthesis. Catalyzes the decarboxylation of Fe-coproporphyrin III (coproheme) to heme b (protoheme IX), the last step of the pathway. The reaction occurs in a stepwise manner with a three-propionate intermediate. The polypeptide is Coproheme decarboxylase (Listeria monocytogenes serotype 4b (strain CLIP80459)).